The following is a 322-amino-acid chain: Nuclease 1, mitochondrial (322 aa).

The Proton acceptor role is filled by H142. N174 is a binding site for Mg(2+).

It belongs to the DNA/RNA non-specific endonuclease family. In terms of assembly, homodimer. Mn(2+) is required as a cofactor. The cofactor is Mg(2+).

The protein resides in the mitochondrion inner membrane. In terms of biological role, this enzyme has both RNase and DNase activity. It degrades single-stranded DNA and RNA. The sequence is that of Nuclease 1, mitochondrial (pnu1) from Schizosaccharomyces pombe (strain 972 / ATCC 24843) (Fission yeast).